The chain runs to 335 residues: Nucleoid-associated protein YejK (335 aa).

This sequence belongs to the YejK family.

It is found in the cytoplasm. The protein localises to the nucleoid. This Shigella boydii serotype 18 (strain CDC 3083-94 / BS512) protein is Nucleoid-associated protein YejK.